The sequence spans 379 residues: Stimulator of interferon genes protein (379 aa).

3 consecutive transmembrane segments (helical) span residues 20-40, 87-107, and 115-135; these read VAAF…GEPS, ACLG…YFYV, and LPLT…ILLG. S-palmitoyl cysteine attachment occurs at residues C88 and C91. The interval 153-340 is cyclic dinucleotide-binding domain (CBD); the sequence is FNVAHGLAWS…KHLRQEEREE (188 aa). 4 residues coordinate 2',3'-cGAMP: S162, Y167, R238, and T263. Residues S162, Y167, 238–241, and T263 contribute to the 3',3'-c-di-GMP site; that span reads RVYT. Positions 167, 238, and 263 each coordinate 2',3'-cUAMP. The interval 340-379 is C-terminal tail (CTT); sequence EVTMGTAGTFVAPGSSTLHQEPELLISGMDQPLPLRTDIF. Residue S355 is modified to Phosphoserine. Residue T356 is modified to Phosphothreonine. A pLxIS motif motif is present at residues 363–366; it reads LLIS. At S366 the chain carries Phosphoserine; by TBK1.

The protein belongs to the STING family. As to quaternary structure, homodimer; forms a homodimer in absence of cyclic nucleotide (c-di-GMP or cGAMP). Homotetramer; in presence of cyclic nucleotide (c-di-GMP or cGAMP), forms tetramers and higher-order oligomers through side-by-side packing. Interacts (when phosphorylated) with IRF3; following activation and phosphorylation on the pLxIS motif by TBK1, recruits IRF3. Interacts with TBK1; when homodimer, leading to subsequent production of IFN-beta. Interacts (via transmembrane domain) with TMEM203. In terms of processing, phosphorylation by TBK1 leads to activation and production of IFN-beta. Following cyclic nucleotide (c-di-GMP or cGAMP)-binding, activation and translocation from the endoplasmic reticulum, STING1 is phosphorylated by TBK1 at Ser-366 in the pLxIS motif. The phosphorylated pLxIS motif constitutes an IRF3-binding motif, leading to recruitment of the transcription factor IRF3 to induce type-I interferons and other cytokines. In contrast, lacks phosphorylation site at position 358, leading to reduced production of type-I interferons and other cytokines.

Its subcellular location is the endoplasmic reticulum membrane. The protein resides in the cytoplasm. It is found in the perinuclear region. It localises to the endoplasmic reticulum-Golgi intermediate compartment membrane. The protein localises to the golgi apparatus membrane. Its subcellular location is the cytoplasmic vesicle. The protein resides in the autophagosome membrane. It is found in the mitochondrion outer membrane. It localises to the cell membrane. It carries out the reaction H(+)(in) = H(+)(out). Facilitator of innate immune signaling that acts as a sensor of cytosolic DNA from bacteria and viruses and promotes low production of type I interferon (IFN-alpha and IFN-beta). Compared to other mammals, STING1-dependent type I interferon induction is strongly reduced in bats, suggesting that the cGAS-STING pathway promotes a limited inflammatory response. Innate immune response is triggered in response to non-CpG double-stranded DNA from viruses and bacteria delivered to the cytoplasm. Acts by binding cyclic dinucleotides: recognizes and binds cyclic di-GMP (c-di-GMP), a second messenger produced by bacteria, cyclic UMP-AMP (2',3'-cUAMP), and cyclic GMP-AMP (cGAMP), a messenger produced by CGAS in response to DNA virus in the cytosol. Upon binding to c-di-GMP, cUAMP or cGAMP, STING1 oligomerizes, translocates from the endoplasmic reticulum and is phosphorylated by TBK1 on the pLxIS motif, leading to recruitment and subsequent activation of the transcription factor IRF3 to induce expression of type I interferon and exert a potent anti-viral state. In addition to promote the production of type I interferons, plays a direct role in autophagy. Following cGAMP-binding, STING1 buds from the endoplasmic reticulum into COPII vesicles, which then form the endoplasmic reticulum-Golgi intermediate compartment (ERGIC). The ERGIC serves as the membrane source for WIPI2 recruitment and LC3 lipidation, leading to formation of autophagosomes that target cytosolic DNA or DNA viruses for degradation by the lysosome. Promotes autophagy by acting as a proton channel that directs proton efflux from the Golgi to facilitate MAP1LC3B/LC3B lipidation. The autophagy- and interferon-inducing activities can be uncoupled and autophagy induction is independent of TBK1 phosphorylation. This chain is Stimulator of interferon genes protein, found in Eidolon helvum (Straw-colored fruit bat).